The chain runs to 165 residues: Heme oxygenase (165 aa).

The protein belongs to the heme oxygenase family.

It catalyses the reaction heme b + 3 reduced [NADPH--hemoprotein reductase] + 3 O2 = biliverdin IXalpha + CO + Fe(2+) + 3 oxidized [NADPH--hemoprotein reductase] + 3 H2O + H(+). Catalyzes the opening of the heme ring to form the open-chain tetrapyrrole biliverdin IX with the release of iron and carbon monoxide (CO). In Xanthomonas campestris pv. campestris (strain 8004), this protein is Heme oxygenase (bphO).